We begin with the raw amino-acid sequence, 523 residues long: Flavin-dependent halogenase armH5 (523 aa).

FAD-binding residues include Gly-17, Ala-20, and Glu-50. Residues Ser-328 and Gly-329 each contribute to the chloride site. Val-330 provides a ligand contact to FAD.

It belongs to the flavin-dependent halogenase family.

The enzyme catalyses melleolide F + FADH2 + chloride + O2 = 6'-chloromelleolide F + FAD + 2 H2O + H(+). Functionally, flavin-dependent halogenase involved in the biosynthesis of melleolides, a range of antifungal and phytotoxic polyketide derivatives composed of an orsellinic acid (OA) moiety esterified to various sesquiterpene alcohols. The halogenase catalyzes the transfer of a single chlorine atom to the melleolide backbone, resulting in a 6'-chloromelleolide product. The enzyme acts on free substrate and does not depend on carrier-protein-dependent acceptor molecules. The protein is Flavin-dependent halogenase armH5 of Armillaria mellea (Honey mushroom).